A 157-amino-acid chain; its full sequence is MAKVESFTLDHTKVKAPYVRLITEETGKKGDVISNYDLRLVQPNTNAIPTAGLHTIEHLLAGLLRDRLDGVIDCSPFGCRTGFHLITWGKHSTTEVAKALKGSLEAIANDIEWKDVQGTDKYSCGNYRDHSLFSAKEWSKEILSQGISDQPFERHVI.

Fe cation contacts are provided by H54, H58, and C124.

Belongs to the LuxS family. As to quaternary structure, homodimer. Requires Fe cation as cofactor.

It carries out the reaction S-(5-deoxy-D-ribos-5-yl)-L-homocysteine = (S)-4,5-dihydroxypentane-2,3-dione + L-homocysteine. Involved in the synthesis of autoinducer 2 (AI-2) which is secreted by bacteria and is used to communicate both the cell density and the metabolic potential of the environment. The regulation of gene expression in response to changes in cell density is called quorum sensing. Catalyzes the transformation of S-ribosylhomocysteine (RHC) to homocysteine (HC) and 4,5-dihydroxy-2,3-pentadione (DPD). In Lactobacillus helveticus (strain DPC 4571), this protein is S-ribosylhomocysteine lyase.